The following is a 208-amino-acid chain: Urease accessory protein UreE (208 aa).

The segment at 145 to 165 (EGGAYSAGGHGHTHAPAATPV) is disordered.

It belongs to the UreE family.

The protein resides in the cytoplasm. Its function is as follows. Involved in urease metallocenter assembly. Binds nickel. Probably functions as a nickel donor during metallocenter assembly. The polypeptide is Urease accessory protein UreE (Polaromonas naphthalenivorans (strain CJ2)).